Consider the following 381-residue polypeptide: Succinyl-diaminopimelate desuccinylase 1 (381 aa).

His-70 provides a ligand contact to Zn(2+). Residue Asp-72 is part of the active site. Asp-103 is a Zn(2+) binding site. Glu-136 acts as the Proton acceptor in catalysis. Zn(2+)-binding residues include Glu-137, Glu-165, and His-354.

It belongs to the peptidase M20A family. DapE subfamily. As to quaternary structure, homodimer. Zn(2+) serves as cofactor. The cofactor is Co(2+).

It carries out the reaction N-succinyl-(2S,6S)-2,6-diaminopimelate + H2O = (2S,6S)-2,6-diaminopimelate + succinate. Its pathway is amino-acid biosynthesis; L-lysine biosynthesis via DAP pathway; LL-2,6-diaminopimelate from (S)-tetrahydrodipicolinate (succinylase route): step 3/3. Its function is as follows. Catalyzes the hydrolysis of N-succinyl-L,L-diaminopimelic acid (SDAP), forming succinate and LL-2,6-diaminopimelate (DAP), an intermediate involved in the bacterial biosynthesis of lysine and meso-diaminopimelic acid, an essential component of bacterial cell walls. This is Succinyl-diaminopimelate desuccinylase 1 from Ruegeria sp. (strain TM1040) (Silicibacter sp.).